Consider the following 128-residue polypeptide: Fluoride-specific ion channel FluC (128 aa).

The next 4 helical transmembrane spans lie at 5–25, 32–52, 70–90, and 106–126; these read ALVA…SMVI, TFPW…GLFA, FFMV…LQTL, and VGSV…ATII. Gly77 and Thr80 together coordinate Na(+).

It belongs to the fluoride channel Fluc/FEX (TC 1.A.43) family.

It is found in the cell inner membrane. The enzyme catalyses fluoride(in) = fluoride(out). Na(+) is not transported, but it plays an essential structural role and its presence is essential for fluoride channel function. Its function is as follows. Fluoride-specific ion channel. Important for reducing fluoride concentration in the cell, thus reducing its toxicity. The polypeptide is Fluoride-specific ion channel FluC (Paramagnetospirillum magneticum (strain ATCC 700264 / AMB-1) (Magnetospirillum magneticum)).